We begin with the raw amino-acid sequence, 182 residues long: Vacuolar protein sorting-associated protein 29 (182 aa).

The residue at position 50 (K50) is an N6-acetyllysine.

Belongs to the VPS29 family. As to quaternary structure, component of the commander complex consisting of the CCC subcomplex and the retriever subcomplex. Component of the heterotrimeric retriever complex formed by VPS26C, VPS29 and VPS35L; within the complex interacts with VPS35L. Component of the heterotrimeric retromer cargo-selective complex (CSC), also described as vacuolar protein sorting subcomplex (VPS) formed by VPS26 (VPS26A or VPS26B), VPS29 and VPS35. The CSC has a highly elongated structure with VPS26 and VPS29 binding independently at opposite distal ends of VPS35 as central platform. The CSC is believed to associate with variable sorting nexins to form functionally distinct retromer complex variants. The originally described retromer complex (also called SNX-BAR retromer) is a pentamer containing the CSC and a heterodimeric membrane-deforming subcomplex formed between SNX1 or SNX2 and SNX5 or SNX6 (also called SNX-BAR subcomplex); the respective CSC and SNX-BAR subcomplexes associate with low affinity. The CSC associates with SNX3 to form a SNX3-retromer complex. The CSC associates with SNX27, the WASH complex and the SNX-BAR subcomplex to form the SNX27-retromer complex. Interacts with VPS26A, VPS35, SNX1, SNX2, SNX3, SNX27, WASHC5. Interacts with TBC1D5; this interaction is blocked by VPS35L in the retriever complex. Interacts with SNX17; the interaction is indirect; SNX17 (via its C-terminus) interacts with the retriever complex (via VPS26C and VPS35L). Interacts with VPS26B and ANKRD27.

The protein localises to the cytoplasm. Its subcellular location is the membrane. It localises to the endosome membrane. Functionally, component of the commander complex that is essential for endosomal recycling of transmembrane cargos; the commander complex is composed of the CCC subcomplex and the retriever subcomplex. Component of the retriever complex, which is a heterotrimeric complex related to retromer cargo-selective complex (CSC) and essential for retromer-independent retrieval and recycling of numerous cargos such as integrin alpha-5/beta-1 (ITGA5:ITGB1). Component of the retromer cargo-selective complex (CSC). The CSC is believed to be the core functional component of retromer or respective retromer complex variants acting to prevent missorting of selected transmembrane cargo proteins into the lysosomal degradation pathway. The recruitment of the CSC to the endosomal membrane involves RAB7A and SNX3. The SNX-BAR retromer mediates retrograde transport of cargo proteins from endosomes to the trans-Golgi network (TGN) and is involved in endosome-to-plasma membrane transport for cargo protein recycling. The SNX3-retromer mediates the retrograde endosome-to-TGN transport of WLS distinct from the SNX-BAR retromer pathway. The SNX27-retromer is believed to be involved in endosome-to-plasma membrane trafficking and recycling of a broad spectrum of cargo proteins. The CSC seems to act as recruitment hub for other proteins, such as the WASH complex and TBC1D5. Required to regulate transcytosis of the polymeric immunoglobulin receptor (pIgR-pIgA). In the endosomes, retriever complex drives the retrieval and recycling of NxxY-motif-containing cargo proteins by coupling to SNX17, a cargo essential for the homeostatic maintenance of numerous cell surface proteins associated with processes that include cell migration, cell adhesion, nutrient supply and cell signaling. The recruitment of the retriever complex to the endosomal membrane involves CCC and WASH complexes. Involved in GLUT1 endosome-to-plasma membrane trafficking; the function is dependent of association with ANKRD27. This chain is Vacuolar protein sorting-associated protein 29 (Vps29), found in Mus musculus (Mouse).